Consider the following 720-residue polypeptide: DNA ligase (720 aa).

Residues 57–61 (DAEYD), 106–107 (SL), and Glu-140 contribute to the NAD(+) site. Residue Lys-142 is the N6-AMP-lysine intermediate of the active site. Arg-163, Glu-200, Lys-316, and Lys-340 together coordinate NAD(+). The Zn(2+) site is built by Cys-434, Cys-437, Cys-458, and Cys-464. A BRCT domain is found at 643 to 720 (AAASPVSGKT…TEDEWFELVG (78 aa)).

Belongs to the NAD-dependent DNA ligase family. LigA subfamily. Mg(2+) is required as a cofactor. The cofactor is Mn(2+).

It catalyses the reaction NAD(+) + (deoxyribonucleotide)n-3'-hydroxyl + 5'-phospho-(deoxyribonucleotide)m = (deoxyribonucleotide)n+m + AMP + beta-nicotinamide D-nucleotide.. In terms of biological role, DNA ligase that catalyzes the formation of phosphodiester linkages between 5'-phosphoryl and 3'-hydroxyl groups in double-stranded DNA using NAD as a coenzyme and as the energy source for the reaction. It is essential for DNA replication and repair of damaged DNA. The protein is DNA ligase of Xanthobacter autotrophicus (strain ATCC BAA-1158 / Py2).